An 89-amino-acid chain; its full sequence is UPF0367 protein P9515_01381 (89 aa).

Belongs to the UPF0367 family.

This chain is UPF0367 protein P9515_01381, found in Prochlorococcus marinus (strain MIT 9515).